The primary structure comprises 190 residues: Holliday junction branch migration complex subunit RuvA (190 aa).

The segment at 1–64 is domain I; sequence MIGRISGQLA…EDAQILYGFG (64 aa). Residues 65 to 137 are domain II; sequence SATERAAFRQ…LKGKLGADIG (73 aa). A flexible linker region spans residues 137 to 141; sequence GVQVS. The segment at 142–190 is domain III; sequence VSSDSQSDILQALVALGYSDRDAALALKALPKDIGVSDGIKLALKALAK.

Belongs to the RuvA family. As to quaternary structure, homotetramer. Forms an RuvA(8)-RuvB(12)-Holliday junction (HJ) complex. HJ DNA is sandwiched between 2 RuvA tetramers; dsDNA enters through RuvA and exits via RuvB. An RuvB hexamer assembles on each DNA strand where it exits the tetramer. Each RuvB hexamer is contacted by two RuvA subunits (via domain III) on 2 adjacent RuvB subunits; this complex drives branch migration. In the full resolvosome a probable DNA-RuvA(4)-RuvB(12)-RuvC(2) complex forms which resolves the HJ.

The protein localises to the cytoplasm. The RuvA-RuvB-RuvC complex processes Holliday junction (HJ) DNA during genetic recombination and DNA repair, while the RuvA-RuvB complex plays an important role in the rescue of blocked DNA replication forks via replication fork reversal (RFR). RuvA specifically binds to HJ cruciform DNA, conferring on it an open structure. The RuvB hexamer acts as an ATP-dependent pump, pulling dsDNA into and through the RuvAB complex. HJ branch migration allows RuvC to scan DNA until it finds its consensus sequence, where it cleaves and resolves the cruciform DNA. The sequence is that of Holliday junction branch migration complex subunit RuvA from Polaromonas sp. (strain JS666 / ATCC BAA-500).